Consider the following 335-residue polypeptide: Nucleoid-associated protein YejK (335 aa).

Belongs to the YejK family.

The protein resides in the cytoplasm. It localises to the nucleoid. This chain is Nucleoid-associated protein YejK, found in Shigella flexneri.